A 529-amino-acid chain; its full sequence is AT hook-containing protein attf-4 (529 aa).

Disordered regions lie at residues 1-39 (MLQP…MEDD), 131-158 (QVVH…KPIE), 173-200 (GGGG…FPPP), and 233-255 (VSAN…DHLE). Polar residues-rich tracts occupy residues 19 to 31 (SVST…SPSN) and 138 to 153 (QNGS…TSEN). Positions 179 to 189 (IHTERLSEPAR) are enriched in basic and acidic residues. The segment covering 233–248 (VSANTSTASPGPSSEG) has biased composition (low complexity). A DNA-binding region (a.T hook) is located at residues 307 to 319 (GRGRGRPKLIGDE). The interval 436–476 (LEGGSPPASSSSTATTSTATKTVKQESKNGHQNEENLNVKQ) is disordered. Residues 443-455 (ASSSSTATTSTAT) are compositionally biased toward low complexity. Residues 458 to 469 (VKQESKNGHQNE) show a composition bias toward basic and acidic residues.

This chain is AT hook-containing protein attf-4, found in Caenorhabditis elegans.